The sequence spans 316 residues: HPr kinase/phosphorylase (316 aa).

Active-site residues include H143 and K164. Residue 158 to 165 (GEAGSGKS) coordinates ATP. S165 contributes to the Mg(2+) binding site. Catalysis depends on D182, which acts as the Proton acceptor; for phosphorylation activity. Proton donor; for dephosphorylation activity. Positions 206–215 (LEVRGLGVLN) are important for the catalytic mechanism of both phosphorylation and dephosphorylation. E207 contributes to the Mg(2+) binding site. R251 is a catalytic residue. The important for the catalytic mechanism of dephosphorylation stretch occupies residues 272–277 (PVMPGR).

It belongs to the HPrK/P family. As to quaternary structure, homohexamer. The cofactor is Mg(2+).

The enzyme catalyses [HPr protein]-L-serine + ATP = [HPr protein]-O-phospho-L-serine + ADP + H(+). It carries out the reaction [HPr protein]-O-phospho-L-serine + phosphate + H(+) = [HPr protein]-L-serine + diphosphate. Catalyzes the ATP- as well as the pyrophosphate-dependent phosphorylation of a specific serine residue in HPr, a phosphocarrier protein of the phosphoenolpyruvate-dependent sugar phosphotransferase system (PTS). HprK/P also catalyzes the pyrophosphate-producing, inorganic phosphate-dependent dephosphorylation (phosphorolysis) of seryl-phosphorylated HPr (P-Ser-HPr). The sequence is that of HPr kinase/phosphorylase from Stenotrophomonas maltophilia (strain K279a).